We begin with the raw amino-acid sequence, 335 residues long: Flagellar P-ring protein (335 aa).

The first 24 residues, 1–24 (MNKITNFLILSAVLFFSLIESANA), serve as a signal peptide directing secretion.

This sequence belongs to the FlgI family. As to quaternary structure, the basal body constitutes a major portion of the flagellar organelle and consists of four rings (L,P,S, and M) mounted on a central rod.

Its subcellular location is the periplasm. The protein localises to the bacterial flagellum basal body. In terms of biological role, assembles around the rod to form the L-ring and probably protects the motor/basal body from shearing forces during rotation. In Bdellovibrio bacteriovorus (strain ATCC 15356 / DSM 50701 / NCIMB 9529 / HD100), this protein is Flagellar P-ring protein.